A 199-amino-acid chain; its full sequence is NAD(P)H dehydrogenase (quinone) (199 aa).

Residues 4–190 enclose the Flavodoxin-like domain; that stretch reads VLVLYYSMYG…AIARFQGKHV (187 aa). Residues 10-15 and 79-81 contribute to the FMN site; these read SMYGHI and TRF. Residue Tyr12 participates in NAD(+) binding. Trp99 is a binding site for substrate. FMN contacts are provided by residues 114–119 and His134; that span reads STGTGG.

Belongs to the WrbA family. The cofactor is FMN.

It carries out the reaction a quinone + NADH + H(+) = a quinol + NAD(+). The enzyme catalyses a quinone + NADPH + H(+) = a quinol + NADP(+). The chain is NAD(P)H dehydrogenase (quinone) from Marinobacter nauticus (strain ATCC 700491 / DSM 11845 / VT8) (Marinobacter aquaeolei).